The primary structure comprises 205 residues: High frequency lysogenization protein HflD homolog (205 aa).

This sequence belongs to the HflD family.

The protein localises to the cytoplasm. It localises to the cell inner membrane. The protein is High frequency lysogenization protein HflD homolog of Vibrio vulnificus (strain CMCP6).